The primary structure comprises 142 residues: Sec-independent protein translocase protein TatB (142 aa).

A helical membrane pass occupies residues 1–21 (MFDFGFSELVVIGVVMLIVVG). The disordered stretch occupies residues 99 to 142 (AAPPDNTTSAESQAAADPAAVDSSQQLELRLDTTPKQVVGSDKA). Positions 107 to 124 (SAESQAAADPAAVDSSQQ) are enriched in low complexity.

Belongs to the TatB family. As to quaternary structure, the Tat system comprises two distinct complexes: a TatABC complex, containing multiple copies of TatA, TatB and TatC subunits, and a separate TatA complex, containing only TatA subunits. Substrates initially bind to the TatABC complex, which probably triggers association of the separate TatA complex to form the active translocon.

The protein resides in the cell inner membrane. Its function is as follows. Part of the twin-arginine translocation (Tat) system that transports large folded proteins containing a characteristic twin-arginine motif in their signal peptide across membranes. Together with TatC, TatB is part of a receptor directly interacting with Tat signal peptides. TatB may form an oligomeric binding site that transiently accommodates folded Tat precursor proteins before their translocation. The sequence is that of Sec-independent protein translocase protein TatB from Azoarcus sp. (strain BH72).